The primary structure comprises 430 residues: Enolase (430 aa).

Position 167 (glutamine 167) interacts with (2R)-2-phosphoglycerate. The Proton donor role is filled by glutamate 209. Aspartate 246, glutamate 287, and aspartate 314 together coordinate Mg(2+). Residues lysine 339, arginine 368, serine 369, and lysine 390 each contribute to the (2R)-2-phosphoglycerate site. Lysine 339 serves as the catalytic Proton acceptor.

The protein belongs to the enolase family. It depends on Mg(2+) as a cofactor.

It is found in the cytoplasm. Its subcellular location is the secreted. The protein resides in the cell surface. It catalyses the reaction (2R)-2-phosphoglycerate = phosphoenolpyruvate + H2O. It participates in carbohydrate degradation; glycolysis; pyruvate from D-glyceraldehyde 3-phosphate: step 4/5. Catalyzes the reversible conversion of 2-phosphoglycerate (2-PG) into phosphoenolpyruvate (PEP). It is essential for the degradation of carbohydrates via glycolysis. This chain is Enolase, found in Prochlorococcus marinus (strain MIT 9515).